The primary structure comprises 1111 residues: NBPF family member NBPF9 (1111 aa).

The stretch at 70–130 forms a coiled coil; that stretch reads MLRNERQFKE…RSLNEHLQAL (61 aa). Residues 161–198 are disordered; sequence KLSPENDEDEDEDVQVEEDEKVLESSAPREVQKAEESK. Positions 165-181 are enriched in acidic residues; sequence ENDEDEDEDVQVEEDEK. Residues 165 to 259 form the Olduvai 1 domain; that stretch reads ENDEDEDEDV…ECQDALNILP (95 aa). The stretch at 341 to 401 forms a coiled coil; it reads MLRNERQFKE…RSLNEHLQAL (61 aa). Olduvai domains follow at residues 436 to 528, 529 to 600, 601 to 692, 695 to 750, 751 to 843, 844 to 919, 920 to 1012, and 1013 to 1111; these read ENDN…HIIP, ENES…VDIG, RHRW…PSCP, SREL…LDLD, RIKK…RSKK, KRRR…LDVD, and ERRR…IFPQ. 2 disordered regions span residues 451–474 and 510–569; these read EKVQ…PEDS and TLIG…STPS. Composition is skewed to acidic residues over residues 530–539 and 550–562; these read NESDDEEEEE and ESEE…ESWD. Disordered stretches follow at residues 829–871 and 999–1033; these read KKGK…LDEK and KGKG…PRLN. Composition is skewed to basic residues over residues 831–849 and 1000–1018; these read GKGK…RRGR.

It belongs to the NBPF family. Expressed in a neuroblastoma cell line.

The protein resides in the cytoplasm. The protein is NBPF family member NBPF9 of Homo sapiens (Human).